The following is a 457-amino-acid chain: Peptidyl-prolyl cis-trans isomerase FKBP5 (457 aa).

An N-acetylmethionine modification is found at Met-1. Positions 1 to 11 (MTTDEGAKNNE) are enriched in basic and acidic residues. The disordered stretch occupies residues 1–24 (MTTDEGAKNNEESPTATVAEQGED). Ser-13 carries the post-translational modification Phosphoserine. The residue at position 28 (Lys-28) is an N6-acetyllysine. The PPIase FKBP-type 1 domain maps to 42–130 (NGEETPMIGD…KIPSNATLFF (89 aa)). Lys-155 is subject to N6-acetyllysine. Residues 157 to 243 (EGYSNPNEGA…GIEPNAELIY (87 aa)) enclose the PPIase FKBP-type 2 domain. TPR repeat units lie at residues 268–301 (AAIVKEKGTVYFKGGKYMQAVIQYGKIVSWLEME), 317–350 (LAAFLNLAMCYLKLREYTKAVECCDKALGLDSAN), and 351–384 (EKGLYRRGEAQLLMNEFESAKGDFEKVLEVNPQN). A disordered region spans residues 420–457 (DAKEEANKAMGKKTSEGVTNEKGTDSQAMEEEKPEGHV). A Phosphoserine modification is found at Ser-445.

As to quaternary structure, part of a heteromultimeric cytoplasmic complex with HSP90AA1, HSPA1A/HSPA1B and steroid receptors. Upon ligand binding dissociates from the complex and FKBP4 takes its place. Interacts with functionally mature heterooligomeric progesterone receptor complexes along with HSP90 and TEBP. Interacts with NR3C1. Interacts with Akt/AKT1 and PHLPP1; enhancing dephosphorylation and subsequent activation of Akt/AKT1. Interacts with IFI44L; this interaction modulates the kinase activity of IKBKB and IKBKE. Interacts with IKBKB and IKBKE. Acetylation impairs ability to promote interaction between Akt/AKT1 and PHLPP1. Deacetylation by SIRT7 promotes interaction between Akt/AKT1 and PHLPP1, leading to suppress Akt/AKT1 activation. In terms of processing, ubiquitinated, leading to degradation in a proteasome-dependent manner. Deubiquitinated by USP49, leading to stabilization. In terms of tissue distribution, widely expressed, enriched in testis compared to other tissues.

Its subcellular location is the cytoplasm. It is found in the nucleus. It carries out the reaction [protein]-peptidylproline (omega=180) = [protein]-peptidylproline (omega=0). With respect to regulation, inhibited by both FK506 and rapamycin. Functionally, immunophilin protein with PPIase and co-chaperone activities. Component of unligated steroid receptors heterocomplexes through interaction with heat-shock protein 90 (HSP90). Plays a role in the intracellular trafficking of heterooligomeric forms of steroid hormone receptors maintaining the complex into the cytoplasm when unliganded. Acts as a regulator of Akt/AKT1 activity by promoting the interaction between Akt/AKT1 and PHLPP1, thereby enhancing dephosphorylation and subsequent activation of Akt/AKT1. Interacts with IKBKE and IKBKB which facilitates IKK complex assembly leading to increased IKBKE and IKBKB kinase activity, NF-kappa-B activation, and IFN production. The sequence is that of Peptidyl-prolyl cis-trans isomerase FKBP5 (FKBP5) from Homo sapiens (Human).